We begin with the raw amino-acid sequence, 584 residues long: AAA ATPase forming ring-shaped complexes (584 aa).

Residues 10-96 (AQSGTEHAEQ…LKENLDAVTH (87 aa)) are a coiled coil. Residues 40-66 (HQLQSAQRHAAGLSERRRAAEAQTQTA) are disordered. 292-297 (GTGKTM) provides a ligand contact to ATP.

It belongs to the AAA ATPase family. In terms of assembly, homohexamer. Assembles into a hexameric ring structure.

The polypeptide is AAA ATPase forming ring-shaped complexes (Micrococcus luteus (strain ATCC 4698 / DSM 20030 / JCM 1464 / CCM 169 / CCUG 5858 / IAM 1056 / NBRC 3333 / NCIMB 9278 / NCTC 2665 / VKM Ac-2230) (Micrococcus lysodeikticus)).